The sequence spans 203 residues: Recombination protein RecR (203 aa).

The C4-type zinc finger occupies 57 to 72; it reads CQRCRTLAETPLCSIC. In terms of domain architecture, Toprim spans 80–175; sequence GLLCVVESPA…RLSRLAYGVP (96 aa).

It belongs to the RecR family.

May play a role in DNA repair. It seems to be involved in an RecBC-independent recombinational process of DNA repair. It may act with RecF and RecO. This Chromohalobacter salexigens (strain ATCC BAA-138 / DSM 3043 / CIP 106854 / NCIMB 13768 / 1H11) protein is Recombination protein RecR.